An 896-amino-acid polypeptide reads, in one-letter code: Alanine--tRNA ligase (896 aa).

Zn(2+) contacts are provided by H599, H603, C707, and H711.

Belongs to the class-II aminoacyl-tRNA synthetase family. It depends on Zn(2+) as a cofactor.

It localises to the cytoplasm. The catalysed reaction is tRNA(Ala) + L-alanine + ATP = L-alanyl-tRNA(Ala) + AMP + diphosphate. Catalyzes the attachment of alanine to tRNA(Ala) in a two-step reaction: alanine is first activated by ATP to form Ala-AMP and then transferred to the acceptor end of tRNA(Ala). Also edits incorrectly charged Ser-tRNA(Ala) and Gly-tRNA(Ala) via its editing domain. This chain is Alanine--tRNA ligase, found in Pyrobaculum calidifontis (strain DSM 21063 / JCM 11548 / VA1).